The chain runs to 302 residues: MADQLIRATAADGGIRAVGVITTNLTEEARQRHRLSYVATAALGRTMAAGLLLASSMKQEKSRVNIRIRGNGPLGGLLVDAGLDGTVRGYVQNPSVELAPNAQGKLDVGGAVGQDGFLYVVRDVGFGYPYSSTVELVSGEIGEDVTHYLVTSEQTPSALLLGVFVGKDGVTAAGGLLLQVMPKAARDEALVAALESRLGHLTGFTPLLRSGKSLKDIFQELLGDFGLAILPEVQLLRFDCRCSFPRVLGALKILGQDELEDMIEKDNGAEATCDFCGEVYQADRHHLAQLIGEIQREKAEKL.

Intrachain disulfides connect C240-C242 and C273-C276.

Belongs to the HSP33 family. Under oxidizing conditions two disulfide bonds are formed involving the reactive cysteines. Under reducing conditions zinc is bound to the reactive cysteines and the protein is inactive.

It localises to the cytoplasm. Redox regulated molecular chaperone. Protects both thermally unfolding and oxidatively damaged proteins from irreversible aggregation. Plays an important role in the bacterial defense system toward oxidative stress. The sequence is that of 33 kDa chaperonin from Synechocystis sp. (strain ATCC 27184 / PCC 6803 / Kazusa).